A 128-amino-acid polypeptide reads, in one-letter code: Cytochrome c-type biogenesis protein CcmE (128 aa).

Residues 1-8 are Cytoplasmic-facing; that stretch reads MQKIVRNR. A helical; Signal-anchor for type II membrane protein transmembrane segment spans residues 9 to 29; it reads LIKIIICFCSACLGISIILYN. At 30–128 the chain is on the periplasmic side; sequence LEKNIIFFFP…KHDENYRPPS (99 aa). Positions 120 and 124 each coordinate heme.

This sequence belongs to the CcmE/CycJ family.

Its subcellular location is the cell inner membrane. Heme chaperone required for the biogenesis of c-type cytochromes. Transiently binds heme delivered by CcmC and transfers the heme to apo-cytochromes in a process facilitated by CcmF and CcmH. The chain is Cytochrome c-type biogenesis protein CcmE from Rickettsia prowazekii (strain Madrid E).